The primary structure comprises 251 residues: Isoprenyl transferase (251 aa).

The active site involves Asp31. Position 31 (Asp31) interacts with Mg(2+). Substrate contacts are provided by residues 32–35, Trp36, Arg44, His48, and 76–78; these read GNGR and STE. Residue Asn79 is the Proton acceptor of the active site. Residues Trp80, Arg82, Arg199, and 205–207 contribute to the substrate site; that span reads RIS. Glu218 provides a ligand contact to Mg(2+).

It belongs to the UPP synthase family. Homodimer. Mg(2+) serves as cofactor.

Functionally, catalyzes the condensation of isopentenyl diphosphate (IPP) with allylic pyrophosphates generating different type of terpenoids. This is Isoprenyl transferase from Thermosynechococcus vestitus (strain NIES-2133 / IAM M-273 / BP-1).